Here is a 21-residue protein sequence, read N- to C-terminus: Trypsin (21 aa).

The propeptide at 1-7 (FPIEEDK) is activation peptide. A Peptidase S1 domain is found at 8 to 21 (IVGGYECPKHXVPW).

The protein belongs to the peptidase S1 family.

It localises to the secreted. Its subcellular location is the extracellular space. It catalyses the reaction Preferential cleavage: Arg-|-Xaa, Lys-|-Xaa.. This chain is Trypsin, found in Protopterus aethiopicus (Marbled lungfish).